Here is a 188-residue protein sequence, read N- to C-terminus: Mitochondrial import inner membrane translocase subunit TIM23-2 (188 aa).

A run of 4 helical transmembrane segments spans residues 64 to 84 (TGTA…ITGV), 112 to 131 (GNRI…GIVA), 138 to 154 (VWTS…VCRA), and 161 to 178 (AAVA…VVAG).

The protein belongs to the Tim17/Tim22/Tim23 family. As to quaternary structure, homomultimer. Component of the TIM17:23 complex at least composed of TIM23, TIM17 and TIM50. The complex interacts with the TIM44 component of the PAM complex. Also part of the NADH-ubiquinone oxidoreductase complex I. Interacts with OEP163, TIM17-2, TIM21, TIM50 and MPPA2. Expressed in roots and young cotyledons. Detected in leaves and flowers.

The protein resides in the mitochondrion inner membrane. Its function is as follows. Essential component of the TIM17:23 complex, a complex that mediates the translocation of transit peptide-containing proteins across the mitochondrial inner membrane. Links the inner and outer membranes. The polypeptide is Mitochondrial import inner membrane translocase subunit TIM23-2 (TIM23-2) (Arabidopsis thaliana (Mouse-ear cress)).